The sequence spans 203 residues: 3-isopropylmalate dehydratase small subunit (203 aa).

This sequence belongs to the LeuD family. LeuD type 1 subfamily. Heterodimer of LeuC and LeuD.

The enzyme catalyses (2R,3S)-3-isopropylmalate = (2S)-2-isopropylmalate. The protein operates within amino-acid biosynthesis; L-leucine biosynthesis; L-leucine from 3-methyl-2-oxobutanoate: step 2/4. Functionally, catalyzes the isomerization between 2-isopropylmalate and 3-isopropylmalate, via the formation of 2-isopropylmaleate. The chain is 3-isopropylmalate dehydratase small subunit from Pelagibacter ubique (strain HTCC1062).